Consider the following 156-residue polypeptide: MSIKNKMKDFFGLEEDPNSTYEEEEYAVANAAAPSTTETSVVRQDDRPKSANNLVALNTKKKDRSKVVLAEPRVFAEAQDISDHLKENRAVIVNLQRMSKEQSRQVVNFLSGVVYALEGSMTSIGHNTILCTPNNVELTGSISNLISEDELHSKGW.

A disordered region spans residues 30–49; it reads NAAAPSTTETSVVRQDDRPK.

Belongs to the SepF family. In terms of assembly, homodimer. Interacts with FtsZ.

It localises to the cytoplasm. Cell division protein that is part of the divisome complex and is recruited early to the Z-ring. Probably stimulates Z-ring formation, perhaps through the cross-linking of FtsZ protofilaments. Its function overlaps with FtsA. The sequence is that of Cell division protein SepF from Exiguobacterium sp. (strain ATCC BAA-1283 / AT1b).